The primary structure comprises 239 residues: MKIDILTLFPEMFSPLEHSIVGKAREKGLLDIQYHNFRENAEKARHVDDEPYGGGQGMLLRAQPIFDSFDAIEKKNPRVILLDPAGKQFDQVYAEDLAQEEELIFICGHYEGYDERIKTLVTDEISLGDYVLTGGELAAMTMIDATVRLIPEVIGKESSHQDDSFSSGLLEYPQYTRPYDYRGMVVPDVLMSGHHEKIRQWRLYESLKKTYERRPDLLEHYQLTVEEEKMLAEIKENKE.

Residues Gly-108 and 127-132 (LGDYVL) each bind S-adenosyl-L-methionine.

This sequence belongs to the RNA methyltransferase TrmD family. In terms of assembly, homodimer.

Its subcellular location is the cytoplasm. It catalyses the reaction guanosine(37) in tRNA + S-adenosyl-L-methionine = N(1)-methylguanosine(37) in tRNA + S-adenosyl-L-homocysteine + H(+). In terms of biological role, specifically methylates guanosine-37 in various tRNAs. This chain is tRNA (guanine-N(1)-)-methyltransferase, found in Streptococcus pneumoniae (strain P1031).